We begin with the raw amino-acid sequence, 519 residues long: Lysine 5,6-aminomutase alpha subunit (519 aa).

57–59 (DEV) contacts adenosylcob(III)alamin. Residues 187 to 192 (RTTGQS), serine 241, tyrosine 266, arginine 271, and asparagine 302 contribute to the pyridoxal 5'-phosphate site.

Belongs to the KamD family. Heterotetramer of 2 alpha and 2 beta subunits. Adenosylcob(III)alamin serves as cofactor. It depends on pyridoxal 5'-phosphate as a cofactor.

It carries out the reaction (3S)-3,6-diaminohexanoate = (3S,5S)-3,5-diaminohexanoate. The enzyme catalyses D-lysine = (2R,5S)-2,5-diaminohexanoate. It participates in amino-acid metabolism; lysine degradation. With respect to regulation, rapidly inactivated in the presence of D-lysine and to a lesser extent in the absence of adenosylcobalamin (Adocbl). Activity is stable in the presence of Adocbl when D-lysine is absent. Adocbl imparts thermal stability at 37 degrees Celsius. Catalyzes the migration of the L-beta-lysine and D-lysine epsilon amino group to the delta carbon to produce 3,5-diaminohexanoate and 2,5-diaminohexanoate, respectively. This Acetoanaerobium sticklandii (strain ATCC 12662 / DSM 519 / JCM 1433 / CCUG 9281 / NCIMB 10654 / HF) (Clostridium sticklandii) protein is Lysine 5,6-aminomutase alpha subunit (kamD).